Reading from the N-terminus, the 419-residue chain is Synaptotagmin-1 (419 aa).

The Vesicular segment spans residues Met1 to Pro58. Asn25 carries an N-linked (GlcNAc...) asparagine glycan. Residues Trp59–Cys80 form a helical membrane-spanning segment. 5 S-palmitoyl cysteine lipidation sites follow: Cys75, Cys76, Cys78, Cys80, and Cys83. Topologically, residues Lys81–Lys419 are cytoplasmic. The tract at residues Lys108–Lys139 is disordered. Acidic residues predominate over residues Gln117–Lys131. Position 126 is a phosphothreonine (Thr126). The segment at Glu133 to Asn379 is phospholipid binding. The C2 1 domain occupies Lys139–Arg258. Residues Leu169, Asp170, and Asp176 each coordinate Ca(2+). Tyr227 is subject to Phosphotyrosine. Asp228, Phe229, Asp230, Ser233, Lys234, and Asp236 together coordinate Ca(2+). Phosphoserine is present on Ser262. Positions Lys270 to His403 constitute a C2 2 domain. Residues Asp301 and Asp307 each contribute to the Ca(2+) site. Phosphoserine is present on residues Ser340 and Ser342. Asp361, Asp363, and Asp369 together coordinate Ca(2+).

It belongs to the synaptotagmin family. Homotetramer. Heterodimer; heterodimerizes with SYT2 in presence of calcium. Interacts with SCAMP5. Interacts with STON2. Forms a complex with SV2B, syntaxin 1 and SNAP25. Interacts with SV2A, SV2B and SV2C. Interacts with RIMS1. Interacts with PRRT2. Interacts with DNAJC5 in a phosphorylation-dependent manner. Interacts (via N-terminus) with RAB3A. Interacts with SYT12. Interacts with calmodulin. Interacts with DNM1 (via C-terminal proline-rich domain (PRD)); this interaction facilitates vesicle fission during clathrin-mediated endocytosis (CME). It depends on Ca(2+) as a cofactor. In terms of processing, glycosylated.

The protein resides in the cytoplasmic vesicle. It is found in the secretory vesicle membrane. The protein localises to the secretory vesicle. It localises to the synaptic vesicle membrane. Its subcellular location is the chromaffin granule membrane. The protein resides in the cytoplasm. Its function is as follows. Calcium sensor that participates in triggering neurotransmitter release at the synapse. May have a regulatory role in the membrane interactions during trafficking of synaptic vesicles at the active zone of the synapse. It binds acidic phospholipids with a specificity that requires the presence of both an acidic head group and a diacyl backbone. A Ca(2+)-dependent interaction between synaptotagmin and putative receptors for activated protein kinase C has also been reported. It can bind to at least three additional proteins in a Ca(2+)-independent manner; these are neurexins, syntaxin and AP2. Plays a role in dendrite formation by melanocytes. The chain is Synaptotagmin-1 from Pongo abelii (Sumatran orangutan).